Here is a 100-residue protein sequence, read N- to C-terminus: Large ribosomal subunit protein bL21 (100 aa).

It belongs to the bacterial ribosomal protein bL21 family. Part of the 50S ribosomal subunit. Contacts protein L20.

In terms of biological role, this protein binds to 23S rRNA in the presence of protein L20. This Wolbachia pipientis subsp. Culex pipiens (strain wPip) protein is Large ribosomal subunit protein bL21.